The sequence spans 186 residues: UPF0397 protein LCABL_04350 (186 aa).

A run of 5 helical transmembrane segments spans residues 12–32, 45–65, 77–97, 112–132, and 150–170; these read VVAI…AVIP, GFLG…IGFL, TPWW…GLFW, IVSF…LIAP, and GIVS…ILLV.

Belongs to the UPF0397 family.

It is found in the cell membrane. This is UPF0397 protein LCABL_04350 from Lacticaseibacillus casei (strain BL23) (Lactobacillus casei).